Reading from the N-terminus, the 315-residue chain is Glutathione synthetase (315 aa).

One can recognise an ATP-grasp domain in the interval 125–310 (KLYTAWFADL…ITGMLMDAIE (186 aa)). 151-207 (WEKHGDIIMKPLDGMGGASIFRVKEGDPNIGVIAETLTELGNRYCMAQNYLPAIKDG) is an ATP binding site. 2 residues coordinate Mg(2+): E281 and N283.

The protein belongs to the prokaryotic GSH synthase family. Mg(2+) is required as a cofactor. The cofactor is Mn(2+).

It carries out the reaction gamma-L-glutamyl-L-cysteine + glycine + ATP = glutathione + ADP + phosphate + H(+). It functions in the pathway sulfur metabolism; glutathione biosynthesis; glutathione from L-cysteine and L-glutamate: step 2/2. The chain is Glutathione synthetase from Salmonella typhi.